The sequence spans 176 residues: Large ribosomal subunit protein uL6 (176 aa).

Positions 156–170 (YKGKGVRYADEQVRR) are enriched in basic and acidic residues. A disordered region spans residues 156 to 176 (YKGKGVRYADEQVRRKEAKKK).

This sequence belongs to the universal ribosomal protein uL6 family. As to quaternary structure, part of the 50S ribosomal subunit.

In terms of biological role, this protein binds to the 23S rRNA, and is important in its secondary structure. It is located near the subunit interface in the base of the L7/L12 stalk, and near the tRNA binding site of the peptidyltransferase center. This Shewanella woodyi (strain ATCC 51908 / MS32) protein is Large ribosomal subunit protein uL6.